Here is a 171-residue protein sequence, read N- to C-terminus: Transcription factor E (171 aa).

An HTH TFE/IIEalpha-type domain is found at 1-81 (MLNLAKELVG…YWKVNVNQIN (81 aa)).

The protein belongs to the TFE family. As to quaternary structure, monomer. Interaction with RNA polymerase subunits RpoF and RpoE is necessary for Tfe stimulatory transcription activity. Able to interact with Tbp and RNA polymerase in the absence of DNA promoter. Interacts both with the preinitiation and elongation complexes.

Functionally, transcription factor that plays a role in the activation of archaeal genes transcribed by RNA polymerase. Facilitates transcription initiation by enhancing TATA-box recognition by TATA-box-binding protein (Tbp), and transcription factor B (Tfb) and RNA polymerase recruitment. Not absolutely required for transcription in vitro, but particularly important in cases where Tbp or Tfb function is not optimal. It dynamically alters the nucleic acid-binding properties of RNA polymerases by stabilizing the initiation complex and destabilizing elongation complexes. Seems to translocate with the RNA polymerase following initiation and acts by binding to the non template strand of the transcription bubble in elongation complexes. This Sulfolobus acidocaldarius (strain ATCC 33909 / DSM 639 / JCM 8929 / NBRC 15157 / NCIMB 11770) protein is Transcription factor E.